A 102-amino-acid chain; its full sequence is NADH-quinone oxidoreductase subunit K (102 aa).

Helical transmembrane passes span 6-26 (LEHGLALASVLFALGLVGLMV), 30-50 (ILFVLMSLEVMMNAAALAFVV), and 62-82 (VMFILVLSLAAAEASIGLAIL).

This sequence belongs to the complex I subunit 4L family. NDH-1 is composed of 13 different subunits. Subunits NuoA, H, J, K, L, M, N constitute the membrane sector of the complex.

Its subcellular location is the cell inner membrane. It catalyses the reaction a quinone + NADH + 5 H(+)(in) = a quinol + NAD(+) + 4 H(+)(out). NDH-1 shuttles electrons from NADH, via FMN and iron-sulfur (Fe-S) centers, to quinones in the respiratory chain. The immediate electron acceptor for the enzyme in this species is believed to be ubiquinone. Couples the redox reaction to proton translocation (for every two electrons transferred, four hydrogen ions are translocated across the cytoplasmic membrane), and thus conserves the redox energy in a proton gradient. This Pseudomonas aeruginosa (strain LESB58) protein is NADH-quinone oxidoreductase subunit K.